The sequence spans 332 residues: Ribosomal RNA small subunit methyltransferase H (332 aa).

Residues 37-39, Asp-55, Phe-82, Asp-103, and Gln-110 contribute to the S-adenosyl-L-methionine site; that span reads GGY. Positions 281 to 332 are disordered; the sequence is TKRPVTPSDEETAANPRARSAKLRAGERTAAPAQPEAPLPHWPTLASVMGRR.

The protein belongs to the methyltransferase superfamily. RsmH family.

The protein localises to the cytoplasm. It catalyses the reaction cytidine(1402) in 16S rRNA + S-adenosyl-L-methionine = N(4)-methylcytidine(1402) in 16S rRNA + S-adenosyl-L-homocysteine + H(+). Its function is as follows. Specifically methylates the N4 position of cytidine in position 1402 (C1402) of 16S rRNA. This chain is Ribosomal RNA small subunit methyltransferase H, found in Rhodopseudomonas palustris (strain BisA53).